Reading from the N-terminus, the 1235-residue chain is DNA polymerase (1235 aa).

The DOD-type homing endonuclease domain maps to 773–887 (LLGYYISSGD…LILLLNSIGV (115 aa)).

It belongs to the DNA polymerase type-B family. This protein undergoes a protein self splicing that involves a post-translational excision of the intervening region (intein) followed by peptide ligation.

It carries out the reaction DNA(n) + a 2'-deoxyribonucleoside 5'-triphosphate = DNA(n+1) + diphosphate. The polypeptide is DNA polymerase (pol) (Pyrococcus horikoshii (strain ATCC 700860 / DSM 12428 / JCM 9974 / NBRC 100139 / OT-3)).